The following is a 295-amino-acid chain: 4-hydroxy-tetrahydrodipicolinate synthase 1 (295 aa).

Residue Thr-46 participates in pyruvate binding. Tyr-134 serves as the catalytic Proton donor/acceptor. Residue Lys-162 is the Schiff-base intermediate with substrate of the active site. Residue Val-204 coordinates pyruvate.

It belongs to the DapA family. As to quaternary structure, homotetramer; dimer of dimers.

The protein localises to the cytoplasm. The enzyme catalyses L-aspartate 4-semialdehyde + pyruvate = (2S,4S)-4-hydroxy-2,3,4,5-tetrahydrodipicolinate + H2O + H(+). The protein operates within amino-acid biosynthesis; L-lysine biosynthesis via DAP pathway; (S)-tetrahydrodipicolinate from L-aspartate: step 3/4. In terms of biological role, catalyzes the condensation of (S)-aspartate-beta-semialdehyde [(S)-ASA] and pyruvate to 4-hydroxy-tetrahydrodipicolinate (HTPA). The protein is 4-hydroxy-tetrahydrodipicolinate synthase 1 of Halalkalibacterium halodurans (strain ATCC BAA-125 / DSM 18197 / FERM 7344 / JCM 9153 / C-125) (Bacillus halodurans).